The primary structure comprises 315 residues: Methionyl-tRNA formyltransferase (315 aa).

A (6S)-5,6,7,8-tetrahydrofolate-binding site is contributed by 113–116; it reads SLLP.

It belongs to the Fmt family.

It catalyses the reaction L-methionyl-tRNA(fMet) + (6R)-10-formyltetrahydrofolate = N-formyl-L-methionyl-tRNA(fMet) + (6S)-5,6,7,8-tetrahydrofolate + H(+). Its function is as follows. Attaches a formyl group to the free amino group of methionyl-tRNA(fMet). The formyl group appears to play a dual role in the initiator identity of N-formylmethionyl-tRNA by promoting its recognition by IF2 and preventing the misappropriation of this tRNA by the elongation apparatus. The chain is Methionyl-tRNA formyltransferase from Pectobacterium atrosepticum (strain SCRI 1043 / ATCC BAA-672) (Erwinia carotovora subsp. atroseptica).